A 111-amino-acid chain; its full sequence is Small ribosomal subunit protein uS10 (111 aa).

This sequence belongs to the universal ribosomal protein uS10 family. As to quaternary structure, part of the 30S ribosomal subunit.

In terms of biological role, involved in the binding of tRNA to the ribosomes. This Protochlamydia amoebophila (strain UWE25) protein is Small ribosomal subunit protein uS10.